Reading from the N-terminus, the 568-residue chain is MPSTDLLTLKAFEPYLEILEVYSTKAKNYVNGHCTKYEPWQLIAWSVVWTLLIVWGYEFVFQPESLWSRFKKKCFKLTRKMPIIGRKIQDKLNKTKDDISKNMSFLKVDKEYVKALPSQGLSSSAVLEKLKEYSSMDAFWQEGRASGTVYSGEEKLTELLVKAYGDFAWSNPLHPDIFPGLRKIEAEIVRIACSLFNGGPDSCGCVTSGGTESILMACKAYRDLAFEKGIKTSEIVAPQSAHAAFNKAASYFGMKIVRVPLTKMMEVDVRAMRRAISRNTAMLVCSTPQFPHGVIDPVPEVAKLAVKYKIPLHVDACLGGFLTVFMEKAGYPLEHPFDFRVKGVTSISADTHKYGYAPKGSSLVLYSDKKYRNYQFFVDTDWQGGIYASPTIAGSRPGGISAACWAALMHFGENGYVEATKQIIKTARFLKSELENIKGIFVFGNPQLSVIALGSRDFDIYRLSNLMTAKGWNLNQLQFPPSIHFCITLLHARKRVAIQFLKDIRESVTQIMKNPKAKTTGMGAIYGMAQTTVDRNMVAELSSVFLDSLYSTDTVTQGSQMNGSPKPH.

The Lumenal portion of the chain corresponds to 1 to 41 (MPSTDLLTLKAFEPYLEILEVYSTKAKNYVNGHCTKYEPWQ). A helical; Signal-anchor for type III membrane protein transmembrane segment spans residues 42 to 62 (LIAWSVVWTLLIVWGYEFVFQ). At 63 to 568 (PESLWSRFKK…SQMNGSPKPH (506 aa)) the chain is on the cytoplasmic side. Lysine 353 carries the post-translational modification N6-(pyridoxal phosphate)lysine; alternate. Residue lysine 353 is modified to N6-acetyllysine; alternate. 3'-nitrotyrosine occurs at positions 356 and 366. A Phosphoserine modification is found at serine 564.

It belongs to the group II decarboxylase family. Sphingosine-1-phosphate lyase subfamily. As to quaternary structure, homodimer. Requires pyridoxal 5'-phosphate as cofactor.

Its subcellular location is the endoplasmic reticulum membrane. The enzyme catalyses sphinganine 1-phosphate = hexadecanal + phosphoethanolamine. The catalysed reaction is sphing-4-enine 1-phosphate = (2E)-hexadecenal + phosphoethanolamine. Its pathway is lipid metabolism; sphingolipid metabolism. Its function is as follows. Cleaves phosphorylated sphingoid bases (PSBs), such as sphingosine-1-phosphate, into fatty aldehydes and phosphoethanolamine. Elevates stress-induced ceramide production and apoptosis. Required for global lipid homeostasis in liver and cholesterol homeostasis in fibroblasts. Involved in the regulation of pro-inflammatory response and neutrophil trafficking. Modulates neuronal autophagy via phosphoethanolamine production which regulates accumulation of aggregate-prone proteins such as APP. Seems to play a role in establishing neuronal contact sites and axonal maintenance. This is Sphingosine-1-phosphate lyase 1 from Pongo abelii (Sumatran orangutan).